Reading from the N-terminus, the 120-residue chain is SPbeta prophage-derived DSR anti-defense 1 (120 aa).

This sequence belongs to the DSR anti-defense 1 family. In terms of assembly, interacts with Bacillus subtilis DSR2 (via C-terminus) in a 2:4 ratio; this interaction leads to the absence of activation of the NADase defense activity of DSR2.

Counteracts the defense-associated sirtuin 2 (DSR2) defense system of the host. Inhibits the NADase activity of host DSR2 by competing with the tail tube protein that normally activates DSR2. This Bacillus subtilis (strain 168) protein is SPbeta prophage-derived DSR anti-defense 1 (yotI).